A 59-amino-acid chain; its full sequence is Large ribosomal subunit protein uL30 (59 aa).

This sequence belongs to the universal ribosomal protein uL30 family. In terms of assembly, part of the 50S ribosomal subunit.

The protein is Large ribosomal subunit protein uL30 of Pectobacterium atrosepticum (strain SCRI 1043 / ATCC BAA-672) (Erwinia carotovora subsp. atroseptica).